The primary structure comprises 270 residues: 4-hydroxy-tetrahydrodipicolinate reductase (270 aa).

NAD(+)-binding positions include 8-13 (GALGRM), Asp-34, 102-104 (GTT), and 128-131 (SQNY). The active-site Proton donor/acceptor is His-160. His-161 serves as a coordination point for (S)-2,3,4,5-tetrahydrodipicolinate. The active-site Proton donor is the Lys-164. 170-171 (GT) is a (S)-2,3,4,5-tetrahydrodipicolinate binding site.

This sequence belongs to the DapB family.

The protein localises to the cytoplasm. The catalysed reaction is (S)-2,3,4,5-tetrahydrodipicolinate + NAD(+) + H2O = (2S,4S)-4-hydroxy-2,3,4,5-tetrahydrodipicolinate + NADH + H(+). The enzyme catalyses (S)-2,3,4,5-tetrahydrodipicolinate + NADP(+) + H2O = (2S,4S)-4-hydroxy-2,3,4,5-tetrahydrodipicolinate + NADPH + H(+). The protein operates within amino-acid biosynthesis; L-lysine biosynthesis via DAP pathway; (S)-tetrahydrodipicolinate from L-aspartate: step 4/4. Catalyzes the conversion of 4-hydroxy-tetrahydrodipicolinate (HTPA) to tetrahydrodipicolinate. The protein is 4-hydroxy-tetrahydrodipicolinate reductase of Methanococcus maripaludis (strain DSM 14266 / JCM 13030 / NBRC 101832 / S2 / LL).